A 475-amino-acid chain; its full sequence is Sulfate adenylyltransferase subunit 1 (475 aa).

One can recognise a tr-type G domain in the interval 25-240 (KSLLRFLTCG…VLETVEVINL (216 aa)). Residues 34-41 (GSVDDGKS) are G1. Residue 34–41 (GSVDDGKS) coordinates GTP. Residues 92 to 96 (GITID) form a G2 region. Residues 113–116 (DTPG) are G3. GTP contacts are provided by residues 113 to 117 (DTPGH) and 168 to 171 (NKMD). The tract at residues 168–171 (NKMD) is G4. The tract at residues 206–208 (SAL) is G5.

It belongs to the TRAFAC class translation factor GTPase superfamily. Classic translation factor GTPase family. CysN/NodQ subfamily. In terms of assembly, heterodimer composed of CysD, the smaller subunit, and CysN.

The catalysed reaction is sulfate + ATP + H(+) = adenosine 5'-phosphosulfate + diphosphate. It participates in sulfur metabolism; hydrogen sulfide biosynthesis; sulfite from sulfate: step 1/3. With CysD forms the ATP sulfurylase (ATPS) that catalyzes the adenylation of sulfate producing adenosine 5'-phosphosulfate (APS) and diphosphate, the first enzymatic step in sulfur assimilation pathway. APS synthesis involves the formation of a high-energy phosphoric-sulfuric acid anhydride bond driven by GTP hydrolysis by CysN coupled to ATP hydrolysis by CysD. This Sodalis glossinidius (strain morsitans) protein is Sulfate adenylyltransferase subunit 1.